A 273-amino-acid chain; its full sequence is Dermonecrotic toxin LruSicTox-alphaIC1d (273 aa).

His-5 is an active-site residue. Mg(2+)-binding residues include Glu-25 and Asp-27. The active-site Nucleophile is His-41. Disulfide bonds link Cys-45–Cys-51 and Cys-47–Cys-190. A Mg(2+)-binding site is contributed by Asp-85.

Belongs to the arthropod phospholipase D family. Class II subfamily. The cofactor is Mg(2+). In terms of tissue distribution, expressed by the venom gland.

Its subcellular location is the secreted. The catalysed reaction is an N-(acyl)-sphingosylphosphocholine = an N-(acyl)-sphingosyl-1,3-cyclic phosphate + choline. The enzyme catalyses an N-(acyl)-sphingosylphosphoethanolamine = an N-(acyl)-sphingosyl-1,3-cyclic phosphate + ethanolamine. It carries out the reaction a 1-acyl-sn-glycero-3-phosphocholine = a 1-acyl-sn-glycero-2,3-cyclic phosphate + choline. It catalyses the reaction a 1-acyl-sn-glycero-3-phosphoethanolamine = a 1-acyl-sn-glycero-2,3-cyclic phosphate + ethanolamine. Functionally, dermonecrotic toxins cleave the phosphodiester linkage between the phosphate and headgroup of certain phospholipids (sphingolipid and lysolipid substrates), forming an alcohol (often choline) and a cyclic phosphate. This toxin acts on sphingomyelin (SM). It may also act on ceramide phosphoethanolamine (CPE), lysophosphatidylcholine (LPC) and lysophosphatidylethanolamine (LPE), but not on lysophosphatidylserine (LPS), and lysophosphatidylglycerol (LPG). It acts by transphosphatidylation, releasing exclusively cyclic phosphate products as second products. Induces dermonecrosis, hemolysis, increased vascular permeability, edema, inflammatory response, and platelet aggregation. The sequence is that of Dermonecrotic toxin LruSicTox-alphaIC1d from Loxosceles rufescens (Mediterranean recluse spider).